The primary structure comprises 113 residues: Small ribosomal subunit protein bS6 (113 aa).

It belongs to the bacterial ribosomal protein bS6 family.

Functionally, binds together with bS18 to 16S ribosomal RNA. This Wigglesworthia glossinidia brevipalpis protein is Small ribosomal subunit protein bS6.